We begin with the raw amino-acid sequence, 238 residues long: Fish-egg lectin (238 aa).

5 tandem repeats follow at residues 1 to 34 (LDCTVIDGNLKQIDAGSGSVVGVNNLNETFVLID), 35 to 68 (NVFTKISGSLKHFSVGPAGQLGVNTANNIFKYQS), 69 to 106 (GGFVQLAGLLKQVDAGGDQIIAGVNMYDDIYCLNMDAN), 107 to 156 (NKWP…CSGS), and 157 to 199 (GSFI…KPDG). The interval 1–199 (LDCTVIDGNL…TGVTRSKPDG (199 aa)) is 5 X approximate tandem repeats. 4 disulfide bridges follow: cysteine 3-cysteine 234, cysteine 100-cysteine 153, cysteine 128-cysteine 133, and cysteine 208-cysteine 226. N-linked (GlcNAc...) asparagine glycosylation occurs at asparagine 27.

It belongs to the tectonin family. In terms of tissue distribution, expressed in the eggs.

It localises to the secreted. In terms of biological role, lipopolysaccharide-binding protein with a very low agglutinating activity for human A-type erythrocytes and interacts with both Gram-positive and Gram-negative bacteria. The polypeptide is Fish-egg lectin (Cyprinus carpio (Common carp)).